A 348-amino-acid chain; its full sequence is Ion-translocating oxidoreductase complex subunit D (348 aa).

4 helical membrane-spanning segments follow: residues 23 to 43 (WVLACALPGLIAQTYFFGYGT), 44 to 64 (LIQLLLAISVAVALEAGIMLL), 72 to 91 (ALRDYSAVVTAWLLAVAIPP), and 126 to 146 (IAYVVLLISFPVQMTSWMAPI). At T187 the chain carries FMN phosphoryl threonine. 5 helical membrane passes run 214-234 (FAGIGWEWVNIAYLLGGLILL), 243-263 (IPMAMLAGLVFTALLAQLFAP), 266-286 (TASPMIHLLSGATMLGAFFIA), 300-320 (LIYGFFIGAMVFLIRSWGGFP), and 321-341 (DGVAFAVLLANMCVPLIDYYT).

The protein belongs to the NqrB/RnfD family. The complex is composed of six subunits: RnfA, RnfB, RnfC, RnfD, RnfE and RnfG. Requires FMN as cofactor.

The protein resides in the cell inner membrane. In terms of biological role, part of a membrane-bound complex that couples electron transfer with translocation of ions across the membrane. This Vibrio cholerae serotype O1 (strain ATCC 39315 / El Tor Inaba N16961) protein is Ion-translocating oxidoreductase complex subunit D.